The primary structure comprises 274 residues: Thymidylate synthase (274 aa).

A dUMP-binding site is contributed by Arg-21. His-51 contributes to the (6R)-5,10-methylene-5,6,7,8-tetrahydrofolate binding site. Position 123 to 124 (123 to 124 (RR)) interacts with dUMP. Cys-156 acts as the Nucleophile in catalysis. DUMP-binding positions include 176-179 (RSAD), Asn-187, and 217-219 (HIY). Asp-179 provides a ligand contact to (6R)-5,10-methylene-5,6,7,8-tetrahydrofolate. Ala-273 provides a ligand contact to (6R)-5,10-methylene-5,6,7,8-tetrahydrofolate.

This sequence belongs to the thymidylate synthase family. Bacterial-type ThyA subfamily. Homodimer.

It is found in the cytoplasm. The catalysed reaction is dUMP + (6R)-5,10-methylene-5,6,7,8-tetrahydrofolate = 7,8-dihydrofolate + dTMP. It functions in the pathway pyrimidine metabolism; dTTP biosynthesis. Its function is as follows. Catalyzes the reductive methylation of 2'-deoxyuridine-5'-monophosphate (dUMP) to 2'-deoxythymidine-5'-monophosphate (dTMP) while utilizing 5,10-methylenetetrahydrofolate (mTHF) as the methyl donor and reductant in the reaction, yielding dihydrofolate (DHF) as a by-product. This enzymatic reaction provides an intracellular de novo source of dTMP, an essential precursor for DNA biosynthesis. This chain is Thymidylate synthase, found in Flavobacterium psychrophilum (strain ATCC 49511 / DSM 21280 / CIP 103535 / JIP02/86).